Reading from the N-terminus, the 249-residue chain is uncharacterized protein (249 aa).

Its subcellular location is the cytoplasm. The protein resides in the nucleus. This is an uncharacterized protein from Schizosaccharomyces pombe (strain 972 / ATCC 24843) (Fission yeast).